The following is a 405-amino-acid chain: Probable tRNA sulfurtransferase (405 aa).

The region spanning 60–165 (AEVDKRLKKV…QDAVYISNQL (106 aa)) is the THUMP domain. ATP-binding positions include 183–184 (ML), 208–209 (HF), arginine 265, glycine 287, and glutamine 296.

It belongs to the ThiI family.

The protein localises to the cytoplasm. It carries out the reaction [ThiI sulfur-carrier protein]-S-sulfanyl-L-cysteine + a uridine in tRNA + 2 reduced [2Fe-2S]-[ferredoxin] + ATP + H(+) = [ThiI sulfur-carrier protein]-L-cysteine + a 4-thiouridine in tRNA + 2 oxidized [2Fe-2S]-[ferredoxin] + AMP + diphosphate. It catalyses the reaction [ThiS sulfur-carrier protein]-C-terminal Gly-Gly-AMP + S-sulfanyl-L-cysteinyl-[cysteine desulfurase] + AH2 = [ThiS sulfur-carrier protein]-C-terminal-Gly-aminoethanethioate + L-cysteinyl-[cysteine desulfurase] + A + AMP + 2 H(+). It participates in cofactor biosynthesis; thiamine diphosphate biosynthesis. Its function is as follows. Catalyzes the ATP-dependent transfer of a sulfur to tRNA to produce 4-thiouridine in position 8 of tRNAs, which functions as a near-UV photosensor. Also catalyzes the transfer of sulfur to the sulfur carrier protein ThiS, forming ThiS-thiocarboxylate. This is a step in the synthesis of thiazole, in the thiamine biosynthesis pathway. The sulfur is donated as persulfide by IscS. The chain is Probable tRNA sulfurtransferase from Lactobacillus helveticus (strain DPC 4571).